A 242-amino-acid chain; its full sequence is EF-hand domain-containing protein D2 (242 aa).

A disordered region spans residues 1 to 53 (MATDELASKLSRRLQMEGEGGGEAPEQPGLNGAAAAAAAAGAPDETAEALGSA). Ala2 is modified (N-acetylalanine). Ser11 bears the Phosphoserine mark. The span at 32–42 (GAAAAAAAAGA) shows a compositional bias: low complexity. 2 positions are modified to phosphoserine: Ser76 and Ser78. Residue Tyr85 is modified to Phosphotyrosine. 2 EF-hand domains span residues 94–129 (KQIKDMEKMFKEYDAGRDGFIDLMELKLMMEKLGAP) and 130–165 (QTHLGLKNMIKEVDEDFDSKLSFREFLLIFRKAAAG). The Ca(2+) site is built by Asp107, Asp111, Glu118, Asp143, Asp145, Asp147, Lys149, and Glu154. Lys235 is modified (N6-acetyllysine).

As to quaternary structure, interacts with CASP9; with inactive form.

It localises to the membrane raft. In terms of biological role, may regulate B-cell receptor (BCR)-induced immature and primary B-cell apoptosis. Plays a role as negative regulator of the canonical NF-kappa-B-activating branch. Controls spontaneous apoptosis through the regulation of BCL2L1 abundance. In Bos taurus (Bovine), this protein is EF-hand domain-containing protein D2 (EFHD2).